We begin with the raw amino-acid sequence, 305 residues long: Coiled-coil domain-containing protein 69-A (305 aa).

Gly-2 carries N-myristoyl glycine lipidation. Residues 13-38 form a disordered region; that stretch reads LRKKKRQKAHQGGLTSQELNDLNAKT. Residues 25 to 38 show a composition bias toward polar residues; that stretch reads GLTSQELNDLNAKT. Residues 42–281 adopt a coiled-coil conformation; the sequence is NEVLQKIKEY…QREKEQNLYR (240 aa).

The protein belongs to the CCDC69 family.

Its subcellular location is the cytoplasm. The protein localises to the cytoskeleton. It localises to the spindle. It is found in the midbody. May act as a scaffold to regulate the recruitment and assembly of spindle midzone components. In Xenopus laevis (African clawed frog), this protein is Coiled-coil domain-containing protein 69-A (ccdc69-a).